The primary structure comprises 1705 residues: Intersectin-1 (1705 aa).

EH domains lie at 21 to 109 (ERAK…PVAM) and 220 to 309 (SRLK…SFRR). EF-hand domains are found at residues 53 to 88 (LPQPVLAQIWALADMNNDGRMDQLEFSIAMKLIKLK) and 253 to 288 (LPQSQLATIWNLSDIDQDGKLTAEEFILAMHLIDVA). Ca(2+) is bound by residues D66, N68, D70, R72, E77, D266, D268, D270, K272, and E277. Disordered regions lie at residues 322-355 (VSVDQRLPEEPEEEEPQNADKKLPVTFEDKKREN), 386-433 (RAEQ…ERRE), and 668-708 (RYKF…PPEP). Positions 325–697 (DQRLPEEPEE…VEKKPEIQEK (373 aa)) are KLERQ. The span at 339–355 (NADKKLPVTFEDKKREN) shows a compositional bias: basic and acidic residues. Positions 350 to 687 (DKKRENFERG…KREESIQKCE (338 aa)) form a coiled coil. Positions 668–699 (RYKFQDEEKEKREESIQKCEVEKKPEIQEKPN) are enriched in basic and acidic residues. Positions 732 to 793 (VKVVYYRALY…PANYAERMPE (62 aa)) constitute an SH3 1 domain. Low complexity predominate over residues 823–833 (AFTNTSTNSNN). A disordered region spans residues 823–851 (AFTNTSTNSNNWADFSSTWPTNNTDKVES). The segment covering 834–846 (WADFSSTWPTNNT) has biased composition (polar residues). The SH3 2 domain occupies 897–955 (VEGLQAQALYPWRAKKDNHLNFNKNDVITVLEQQDMWWFGEVQGQKGWFPKSYVKLISG). The interval 959-978 (KSTSIDSTSSESPASLKRVS) is disordered. Low complexity predominate over residues 960–973 (STSIDSTSSESPAS). 3 SH3 domains span residues 986-1044 (IQGE…PKDS), 1058-1122 (KKPE…LLSP), and 1139-1198 (PPTC…LTTD). Residues 1088 to 1111 (RKKNPGGWWEGELQARGKKRQIGW) carry the Bipartite nuclear localization signal; in isoform 2 motif. Residues 1221 to 1407 (KRQGYIHELI…EELCSQVNEG (187 aa)) enclose the DH domain. In terms of domain architecture, PH spans 1446 to 1555 (KFLHSGKLYK…WVQKIKAASE (110 aa)). The 117-residue stretch at 1563–1679 (KKREKAYLVR…KKDQGSKGPV (117 aa)) folds into the C2 domain. 3 residues coordinate Ca(2+): D1651, S1654, and D1657.

As to quaternary structure, binds epn1 and epn2. Ca(2+) is required as a cofactor.

Its subcellular location is the endomembrane system. It is found in the synapse. The protein localises to the synaptosome. It localises to the cell projection. The protein resides in the lamellipodium. Its subcellular location is the cell membrane. It is found in the membrane. The protein localises to the clathrin-coated pit. It localises to the recycling endosome. The protein resides in the cytoplasm. Its subcellular location is the nucleus envelope. In terms of biological role, adapter protein that provides a link between the endocytic membrane traffic and the actin assembly machinery. Acts as a guanine nucleotide exchange factor (GEF) for cdc42, and thereby stimulates actin nucleation mediated by wasl and the arp2/3 complex. Involved in endocytosis of activated egfr, and probably also other growth factor receptors. This Xenopus laevis (African clawed frog) protein is Intersectin-1 (itsn1).